We begin with the raw amino-acid sequence, 262 residues long: Demethyldecarbamoylnovobiocin O-methyltransferase (262 aa).

An S-adenosyl-L-methionine-binding site is contributed by 64–65 (TM). The active-site Proton acceptor is the glutamate 72. S-adenosyl-L-methionine contacts are provided by residues 92 to 96 (ETGVW), 122 to 126 (DSFQG), phenylalanine 178, 196 to 197 (DG), and serine 202. Aspartate 196 contacts Mg(2+). Aspartate 223 and aspartate 224 together coordinate Mg(2+).

Belongs to the methyltransferase TylF/MycF family. In terms of assembly, homodimer. The cofactor is Mg(2+).

It carries out the reaction desmethyldescarbamoylnovobiocin + S-adenosyl-L-methionine = descarbamoylnovobiocin + S-adenosyl-L-homocysteine + H(+). It participates in antibiotic biosynthesis; novobiocin biosynthesis. S-adenosyl-L-methionine-dependent O-methyltransferase that methylates at 4-OH of the noviose moiety, the penultimate step in the novobiocin biosynthesis pathway. Novobiocin is an aminocoumarin family antibiotic that targets bacterial DNA gyrases. This Streptomyces niveus (Streptomyces spheroides) protein is Demethyldecarbamoylnovobiocin O-methyltransferase (novP).